The following is a 458-amino-acid chain: SLIT-ROBO Rho GTPase-activating protein 2B (458 aa).

One can recognise an F-BAR domain in the interval 22-324 (KEIRAQLTEQ…AVENLDATSD (303 aa)). A compositionally biased stretch (basic and acidic residues) spans 181 to 203 (LKEAEKQEEKQIGKSVKQEDRQT). A disordered region spans residues 181–214 (LKEAEKQEEKQIGKSVKQEDRQTPRSPDSTANVR). Residues 362–400 (QSELLQRCQQLQSRLSTLKIENEEVKKTMEATLQTIQDI) adopt a coiled-coil conformation.

As to quaternary structure, may interact with SRGAP2; formation of the heterodimer alters SRGAP2 function.

Functionally, may regulate cell migration and differentiation through interaction with and inhibition of SRGAP2. In contrast to SRGAP2C, it is not able to induce long-lasting changes in synaptic density throughout adulthood. The chain is SLIT-ROBO Rho GTPase-activating protein 2B (SRGAP2B) from Homo sapiens (Human).